The primary structure comprises 352 residues: Probable dual-specificity RNA methyltransferase RlmN (352 aa).

Catalysis depends on E92, which acts as the Proton acceptor. The Radical SAM core domain occupies 98 to 328 (YKHGFTACIS…ATIRREMGTD (231 aa)). C105 and C333 are joined by a disulfide. [4Fe-4S] cluster contacts are provided by C112, C116, and C119. S-adenosyl-L-methionine contacts are provided by residues 159–160 (GE), S191, 214–216 (SLH), and N290. C333 serves as the catalytic S-methylcysteine intermediate.

It belongs to the radical SAM superfamily. RlmN family. The cofactor is [4Fe-4S] cluster.

Its subcellular location is the cytoplasm. It catalyses the reaction adenosine(2503) in 23S rRNA + 2 reduced [2Fe-2S]-[ferredoxin] + 2 S-adenosyl-L-methionine = 2-methyladenosine(2503) in 23S rRNA + 5'-deoxyadenosine + L-methionine + 2 oxidized [2Fe-2S]-[ferredoxin] + S-adenosyl-L-homocysteine. The catalysed reaction is adenosine(37) in tRNA + 2 reduced [2Fe-2S]-[ferredoxin] + 2 S-adenosyl-L-methionine = 2-methyladenosine(37) in tRNA + 5'-deoxyadenosine + L-methionine + 2 oxidized [2Fe-2S]-[ferredoxin] + S-adenosyl-L-homocysteine. Its function is as follows. Specifically methylates position 2 of adenine 2503 in 23S rRNA and position 2 of adenine 37 in tRNAs. This chain is Probable dual-specificity RNA methyltransferase RlmN, found in Alkaliphilus metalliredigens (strain QYMF).